A 369-amino-acid polypeptide reads, in one-letter code: MQEKGLAGKMMDIVPGLLVMVGTLYVLRTYVEPWMKDAVVFGRKGWLVQVLSLNYILLSILTGMFYRNILFGGKIPGWAEEGFRTTRLFIKTGVIMLGSLYTFDKLLKVGGVAITLIVAFVFGTAIFIMWLGSRLGADRSVTATMAAACGVCGVSAAVATAPGVRAKPVDLALSIATILGFGIMTMFVSPFIGKALQLSDYQFGAWVGTGILNSGQVLATCLAFNPVFAPGTAVAYGEIWNVVRVICIPFVVFFITAWYWKGEADAEHTSLGSILASKFPIFVLGFVGMTALSSLHMLGAEGSETLHLMRDVMAWIFGVGLVGLGAYIDVREIKAAGGVPLRIGLIAGMVKYILALIIILAFIPKEGAF.

Helical transmembrane passes span Ile-13–Val-31, Trp-46–Phe-65, Gly-110–Gly-132, Thr-142–Val-164, Leu-171–Gly-193, Trp-240–Gly-262, Thr-269–Ala-291, Leu-306–Ile-328, and Leu-341–Ile-363.

The protein belongs to the UPF0324 family.

It localises to the cell membrane. In Nitratidesulfovibrio vulgaris (strain ATCC 29579 / DSM 644 / CCUG 34227 / NCIMB 8303 / VKM B-1760 / Hildenborough) (Desulfovibrio vulgaris), this protein is UPF0324 membrane protein DVU_0543.